The chain runs to 128 residues: Aspartate 1-decarboxylase (128 aa).

The active-site Schiff-base intermediate with substrate; via pyruvic acid is the Ser-25. Ser-25 is subject to Pyruvic acid (Ser). Thr-57 contacts substrate. Residue Tyr-58 is the Proton donor of the active site. 73–75 (GSA) is a substrate binding site.

The protein belongs to the PanD family. In terms of assembly, heterooctamer of four alpha and four beta subunits. Requires pyruvate as cofactor. In terms of processing, is synthesized initially as an inactive proenzyme, which is activated by self-cleavage at a specific serine bond to produce a beta-subunit with a hydroxyl group at its C-terminus and an alpha-subunit with a pyruvoyl group at its N-terminus.

It localises to the cytoplasm. The enzyme catalyses L-aspartate + H(+) = beta-alanine + CO2. It functions in the pathway cofactor biosynthesis; (R)-pantothenate biosynthesis; beta-alanine from L-aspartate: step 1/1. Functionally, catalyzes the pyruvoyl-dependent decarboxylation of aspartate to produce beta-alanine. This Burkholderia ambifaria (strain ATCC BAA-244 / DSM 16087 / CCUG 44356 / LMG 19182 / AMMD) (Burkholderia cepacia (strain AMMD)) protein is Aspartate 1-decarboxylase.